We begin with the raw amino-acid sequence, 551 residues long: Hydroxymethylpyrimidine/phosphomethylpyrimidine kinase THI21 (551 aa).

Glutamine 64 is a binding site for 4-amino-5-hydroxymethyl-2-methylpyrimidine.

It in the N-terminal section; belongs to the ThiD family. The protein in the C-terminal section; belongs to the thiaminase-2 family.

The catalysed reaction is 4-amino-5-hydroxymethyl-2-methylpyrimidine + ATP = 4-amino-2-methyl-5-(phosphooxymethyl)pyrimidine + ADP + H(+). It catalyses the reaction 4-amino-2-methyl-5-(phosphooxymethyl)pyrimidine + ATP = 4-amino-2-methyl-5-(diphosphooxymethyl)pyrimidine + ADP. It functions in the pathway cofactor biosynthesis; thiamine diphosphate biosynthesis; 4-amino-2-methyl-5-diphosphomethylpyrimidine from 5-amino-1-(5-phospho-D-ribosyl)imidazole: step 2/3. It participates in cofactor biosynthesis; thiamine diphosphate biosynthesis; 4-amino-2-methyl-5-diphosphomethylpyrimidine from 5-amino-1-(5-phospho-D-ribosyl)imidazole: step 3/3. Catalyzes the phosphorylation of hydroxymethylpyrimidine phosphate (HMP-P) to HMP-PP, and also probably that of HMP to HMP-P. The sequence is that of Hydroxymethylpyrimidine/phosphomethylpyrimidine kinase THI21 (THI21) from Saccharomyces cerevisiae (strain ATCC 204508 / S288c) (Baker's yeast).